Consider the following 396-residue polypeptide: MTKRLFTSESVTEGHPDKICDQISDAVLDAIYEKDPQARVACETAVTTGMVMVMGEITTNCYVDIPKVVRNTIREIGYDRAKYGFDCDTCAVMTSIDEQSSDIAMGVDKALEAKVGEMSEEQVQAIGAGDQGMMFGFACDETPELMPMPIILAHKLTMKLSEVRKNGKVKYLRPDGKSQVTVEYDGDKPVRVDTVVISTQHGADVSHDTIEKDIMEHVIIPVIPRELLDEGTKYFINPTGRFVVGGPQGDSGLTGRKIIVDTYGGYARHGGGAFSGKDPTKVDRSAAYAARYVAKNIVASGIARKCEVQLAYAIGVAKPVSVLVDTFGTAVIPEEKISELVNKHFDLRPAAIINKLNLRRPIYRKTAAYGHFGRDDAEFSWEKTDVADALRKEAGL.

H15 provides a ligand contact to ATP. D17 is a Mg(2+) binding site. Position 43 (E43) interacts with K(+). L-methionine-binding residues include E56 and Q99. The interval 99 to 109 (QSSDIAMGVDK) is flexible loop. Residues 175 to 177 (DGK), 241 to 242 (RF), D250, 256 to 257 (RK), A273, and K277 each bind ATP. Residue D250 participates in L-methionine binding. L-methionine is bound at residue K281.

Belongs to the AdoMet synthase family. As to quaternary structure, homotetramer; dimer of dimers. Requires Mg(2+) as cofactor. K(+) is required as a cofactor.

It is found in the cytoplasm. The catalysed reaction is L-methionine + ATP + H2O = S-adenosyl-L-methionine + phosphate + diphosphate. It participates in amino-acid biosynthesis; S-adenosyl-L-methionine biosynthesis; S-adenosyl-L-methionine from L-methionine: step 1/1. In terms of biological role, catalyzes the formation of S-adenosylmethionine (AdoMet) from methionine and ATP. The overall synthetic reaction is composed of two sequential steps, AdoMet formation and the subsequent tripolyphosphate hydrolysis which occurs prior to release of AdoMet from the enzyme. The protein is S-adenosylmethionine synthase of Ruminiclostridium cellulolyticum (strain ATCC 35319 / DSM 5812 / JCM 6584 / H10) (Clostridium cellulolyticum).